A 1020-amino-acid chain; its full sequence is MGRGAGREYSPAATTAENGGGKKKQKEKELDELKKEVAMDDHKLSLDELGRKYQVDLSKGLTNQRAQDILARDGPNALTPPPTTPEWVKFCRQLFGGFSILLWIGAILCFLAFGIQAAMEDEPSNDNLYLGVVLAAVVIVTGCFSYYQEAKSSKIMDSFKNMVPQQALVVREGEKMQINAEEVVVGDLVEVKGGDRVPADLRIISSHGCKVDNSSLTGESEPQTRSPEFTHENPLETRNICFFSTNCVEGTARGIVIATGDRTVMGRIATLASGLEVGRTPIAMEIEHFIQLITGVAVFLGVSFFVLSLILGYSWLEAVIFLIGIIVANVPEGLLATVTVCLTLTAKRMARKNCLVKNLEAVETLGSTSTICSDKTGTLTQNRMTVAHMWFDNQIHEADTTEDQSGATFDKRSPTWTALSRIAGLCNRAVFKAGQENISVSKRDTAGDASESALLKCIELSCGSVRKMRDRNPKVAEIPFNSTNKYQLSIHEREDSPQSHVLVMKGAPERILDRCSSILVQGKEIPLDKEMQDAFQNAYLELGGLGERVLGFCQLNLPSAKFPRGFKFDTDELNFPTEKLCFVGLMSMIDPPRAAVPDAVGKCRSAGIKVIMVTGDHPITAKAIAKGVGIISEGNETVEDIAARLNIPVSQVNPREAKACVVHGSDLKDMTSEQLDEILKNHTEIVFARTSPQQKLIIVEGCQRQGAIVAVTGDGVNDSPALKKADIGIAMGIAGSDVSKQAADMILLDDNFASIVTGVEEGRLIFDNLKKSIAYTLTSNIPEITPFLLFIIANIPLPLGTVTILCIDLGTDMVPAISLAYEAAESDIMKRQPRNPQTDKLVNERLISMAYGQIGMIQALGGFFTYFVILAENGFLPSRLLGIRLDWDDRSMNDLEDSYGQEWTYEQRKVVEFTCHTAFFASIVVVQWADLIICKTRRNSVFQQGMKNKILIFGLLEETALAAFLSYCPGMGVALRMYPLKVTWWFCAFPYSLLIFIYDEVRKLILRRYPGGWVEKETYY.

The propeptide occupies 1 to 5 (MGRGA). A disordered region spans residues 1–31 (MGRGAGREYSPAATTAENGGGKKKQKEKELD). Over 6 to 85 (GREYSPAATT…NALTPPPTTP (80 aa)) the chain is Cytoplasmic. Position 10 is a phosphoserine (Ser-10). Residues 80-82 (PPP) form an interaction with phosphoinositide-3 kinase region. The chain crosses the membrane as a helical span at residues 86–106 (EWVKFCRQLFGGFSILLWIGA). The Extracellular segment spans residues 107–129 (ILCFLAFGIQAAMEDEPSNDNLY). A helical membrane pass occupies residues 130 to 150 (LGVVLAAVVIVTGCFSYYQEA). Over 151–286 (KSSKIMDSFK…VGRTPIAMEI (136 aa)) the chain is Cytoplasmic. Residues 212 to 227 (DNSSLTGESEPQTRSP) show a composition bias toward polar residues. A disordered region spans residues 212 to 231 (DNSSLTGESEPQTRSPEFTH). A helical membrane pass occupies residues 287–306 (EHFIQLITGVAVFLGVSFFV). Residues 307–318 (LSLILGYSWLEA) lie on the Extracellular side of the membrane. Residues 319-336 (VIFLIGIIVANVPEGLLA) traverse the membrane as a helical segment. The Cytoplasmic portion of the chain corresponds to 337 to 769 (TVTVCLTLTA…EEGRLIFDNL (433 aa)). Asp-374 acts as the 4-aspartylphosphate intermediate in catalysis. A phosphoserine mark is found at Ser-439, Ser-450, Ser-496, and Ser-559. Thr-570 is modified (phosphothreonine). Phosphoserine occurs at positions 587 and 672. Asp-714 and Asp-718 together coordinate Mg(2+). The chain crosses the membrane as a helical span at residues 770-789 (KKSIAYTLTSNIPEITPFLL). Over 790–799 (FIIANIPLPL) the chain is Extracellular. Residues 800–820 (GTVTILCIDLGTDMVPAISLA) form a helical membrane-spanning segment. Residues 821–840 (YEAAESDIMKRQPRNPQTDK) are Cytoplasmic-facing. Ser-826 bears the Phosphoserine mark. The helical transmembrane segment at 841–863 (LVNERLISMAYGQIGMIQALGGF) threads the bilayer. Residues 864 to 915 (FTYFVILAENGFLPSRLLGIRLDWDDRSMNDLEDSYGQEWTYEQRKVVEFTC) are Extracellular-facing. A helical transmembrane segment spans residues 916-935 (HTAFFASIVVVQWADLIICK). Over 936–948 (TRRNSVFQQGMKN) the chain is Cytoplasmic. Phosphoserine; by PKA is present on Ser-940. The chain crosses the membrane as a helical span at residues 949–967 (KILIFGLLEETALAAFLSY). Over 968–982 (CPGMGVALRMYPLKV) the chain is Extracellular. The chain crosses the membrane as a helical span at residues 983-1003 (TWWFCAFPYSLLIFIYDEVRK). Over 1004-1020 (LILRRYPGGWVEKETYY) the chain is Cytoplasmic.

This sequence belongs to the cation transport ATPase (P-type) (TC 3.A.3) family. Type IIC subfamily. In terms of assembly, the sodium/potassium-transporting ATPase is composed of a catalytic alpha subunit, an auxiliary non-catalytic beta subunit and an additional regulatory subunit. Interacts with regulatory subunit FXYD1.

The protein resides in the membrane. It localises to the cell membrane. The catalysed reaction is K(+)(out) + Na(+)(in) + ATP + H2O = K(+)(in) + Na(+)(out) + ADP + phosphate + H(+). Its function is as follows. This is the catalytic component of the active enzyme, which catalyzes the hydrolysis of ATP coupled with the exchange of sodium and potassium ions across the plasma membrane. This action creates the electrochemical gradient of sodium and potassium, providing the energy for active transport of various nutrients. The chain is Sodium/potassium-transporting ATPase subunit alpha-2 (ATP1A2) from Bos taurus (Bovine).